A 445-amino-acid polypeptide reads, in one-letter code: tRNA(Ile)-lysidine synthase (445 aa).

An ATP-binding site is contributed by 33–38; that stretch reads SGGLDS.

This sequence belongs to the tRNA(Ile)-lysidine synthase family.

It localises to the cytoplasm. The catalysed reaction is cytidine(34) in tRNA(Ile2) + L-lysine + ATP = lysidine(34) in tRNA(Ile2) + AMP + diphosphate + H(+). Its function is as follows. Ligates lysine onto the cytidine present at position 34 of the AUA codon-specific tRNA(Ile) that contains the anticodon CAU, in an ATP-dependent manner. Cytidine is converted to lysidine, thus changing the amino acid specificity of the tRNA from methionine to isoleucine. The sequence is that of tRNA(Ile)-lysidine synthase from Pseudomonas syringae pv. tomato (strain ATCC BAA-871 / DC3000).